A 208-amino-acid chain; its full sequence is Phosphoheptose isomerase (208 aa).

Residues 38-200 form the SIS domain; the sequence is MAVTLAKGHK…LFENVLALQP (163 aa). Residue 53–55 coordinates substrate; sequence NGG. Residues His-62 and Glu-66 each contribute to the Zn(2+) site. Residues Glu-66, 95-96, 121-123, Ser-126, and Gln-173 contribute to the substrate site; these read ND and STS. Residues Gln-173 and His-181 each coordinate Zn(2+).

It belongs to the SIS family. GmhA subfamily. In terms of assembly, homotetramer. It depends on Zn(2+) as a cofactor.

The protein localises to the cytoplasm. The enzyme catalyses 2 D-sedoheptulose 7-phosphate = D-glycero-alpha-D-manno-heptose 7-phosphate + D-glycero-beta-D-manno-heptose 7-phosphate. It functions in the pathway carbohydrate biosynthesis; D-glycero-D-manno-heptose 7-phosphate biosynthesis; D-glycero-alpha-D-manno-heptose 7-phosphate and D-glycero-beta-D-manno-heptose 7-phosphate from sedoheptulose 7-phosphate: step 1/1. Functionally, catalyzes the isomerization of sedoheptulose 7-phosphate in D-glycero-D-manno-heptose 7-phosphate. In Nitratidesulfovibrio vulgaris (strain ATCC 29579 / DSM 644 / CCUG 34227 / NCIMB 8303 / VKM B-1760 / Hildenborough) (Desulfovibrio vulgaris), this protein is Phosphoheptose isomerase.